We begin with the raw amino-acid sequence, 104 residues long: Large ribosomal subunit protein bL21c (104 aa).

This sequence belongs to the bacterial ribosomal protein bL21 family. In terms of assembly, part of the 50S ribosomal subunit.

It is found in the plastid. Its subcellular location is the chloroplast. In terms of biological role, this protein binds to 23S rRNA. The polypeptide is Large ribosomal subunit protein bL21c (Pyropia yezoensis (Susabi-nori)).